We begin with the raw amino-acid sequence, 308 residues long: Tetraacyldisaccharide 4'-kinase (308 aa).

63–70 serves as a coordination point for ATP; that stretch reads SFGGNGKT.

The protein belongs to the LpxK family.

The catalysed reaction is a lipid A disaccharide + ATP = a lipid IVA + ADP + H(+). It participates in glycolipid biosynthesis; lipid IV(A) biosynthesis; lipid IV(A) from (3R)-3-hydroxytetradecanoyl-[acyl-carrier-protein] and UDP-N-acetyl-alpha-D-glucosamine: step 6/6. Transfers the gamma-phosphate of ATP to the 4'-position of a tetraacyldisaccharide 1-phosphate intermediate (termed DS-1-P) to form tetraacyldisaccharide 1,4'-bis-phosphate (lipid IVA). In Campylobacter jejuni subsp. doylei (strain ATCC BAA-1458 / RM4099 / 269.97), this protein is Tetraacyldisaccharide 4'-kinase.